A 233-amino-acid chain; its full sequence is Uracil-DNA glycosylase (233 aa).

Asp70 serves as the catalytic Proton acceptor.

Belongs to the uracil-DNA glycosylase (UDG) superfamily. UNG family.

Its subcellular location is the cytoplasm. It catalyses the reaction Hydrolyzes single-stranded DNA or mismatched double-stranded DNA and polynucleotides, releasing free uracil.. Excises uracil residues from the DNA which can arise as a result of misincorporation of dUMP residues by DNA polymerase or due to deamination of cytosine. This chain is Uracil-DNA glycosylase, found in Oleidesulfovibrio alaskensis (strain ATCC BAA-1058 / DSM 17464 / G20) (Desulfovibrio alaskensis).